The following is a 69-amino-acid chain: uncharacterized protein (69 aa).

The protein resides in the mitochondrion. This is an uncharacterized protein from Marchantia polymorpha (Common liverwort).